The following is an 80-amino-acid chain: Translation initiation factor IF-1, chloroplastic (80 aa).

One can recognise an S1-like domain in the interval 1–72; that stretch reads MKKQNLIDME…TKGRIIYRLR (72 aa).

Belongs to the IF-1 family. In terms of assembly, component of the 30S ribosomal translation pre-initiation complex which assembles on the 30S ribosome in the order IF-2 and IF-3, IF-1 and N-formylmethionyl-tRNA(fMet); mRNA recruitment can occur at any time during PIC assembly.

It is found in the plastid. The protein localises to the chloroplast. One of the essential components for the initiation of protein synthesis. Stabilizes the binding of IF-2 and IF-3 on the 30S subunit to which N-formylmethionyl-tRNA(fMet) subsequently binds. Helps modulate mRNA selection, yielding the 30S pre-initiation complex (PIC). Upon addition of the 50S ribosomal subunit IF-1, IF-2 and IF-3 are released leaving the mature 70S translation initiation complex. In Adiantum capillus-veneris (Maidenhair fern), this protein is Translation initiation factor IF-1, chloroplastic.